The chain runs to 318 residues: MTLANATHTSAIDIARFGKVAVMFGGRSAEREVSLRSGQAVLSALISAGVNAHGFDPAESELHQLVEQKFDRVLIMLHGRGGEDGSLQGALQQMNMPYTGTGVLGSALCMDKIRSKQVWQSLGLPTANYEIADKRDFNAANCSDIMSRLGDLVMVKPAQEGSSIGMAKVSNAQQLAAAIQQAFEYDDKVLLEQFIQGSEYTVSLLNGEAMPSISMSTPRDFYDYEAKYQSNTTEYFCPSGLPAEQEGLLARLALDAFDAVAGSGWGRVDFMQDMLGQFYLLEANTVPGMTEKSLVPLAAKQAGLSFEQLSLAVLATAG.

The region spanning 116 to 315 (KQVWQSLGLP…FEQLSLAVLA (200 aa)) is the ATP-grasp domain. 146–201 (MSRLGDLVMVKPAQEGSSIGMAKVSNAQQLAAAIQQAFEYDDKVLLEQFIQGSEYT) contributes to the ATP binding site. The Mg(2+) site is built by aspartate 269, glutamate 282, and asparagine 284.

This sequence belongs to the D-alanine--D-alanine ligase family. Mg(2+) is required as a cofactor. Mn(2+) serves as cofactor.

The protein resides in the cytoplasm. The catalysed reaction is 2 D-alanine + ATP = D-alanyl-D-alanine + ADP + phosphate + H(+). Its pathway is cell wall biogenesis; peptidoglycan biosynthesis. Its function is as follows. Cell wall formation. This Pseudoalteromonas atlantica (strain T6c / ATCC BAA-1087) protein is D-alanine--D-alanine ligase.